The sequence spans 269 residues: 5'-nucleotidase SurE (269 aa).

4 residues coordinate a divalent metal cation: D8, D9, S39, and N92.

The protein belongs to the SurE nucleotidase family. A divalent metal cation is required as a cofactor.

The protein resides in the cytoplasm. The enzyme catalyses a ribonucleoside 5'-phosphate + H2O = a ribonucleoside + phosphate. Functionally, nucleotidase that shows phosphatase activity on nucleoside 5'-monophosphates. The chain is 5'-nucleotidase SurE from Psychrobacter cryohalolentis (strain ATCC BAA-1226 / DSM 17306 / VKM B-2378 / K5).